An 801-amino-acid polypeptide reads, in one-letter code: Potassium transporter 1 (801 aa).

Residues 1–20 form a disordered region; sequence MSSALEVEGSGSPGVEPAAT. The Cytoplasmic segment spans residues 1–57; that stretch reads MSSALEVEGSGSPGVEPAATATASRLKRHDSLFGDAEKVSGGKHHGGSAVSWAVTLH. The helical transmembrane segment at 58 to 80 threads the bilayer; that stretch reads LAFQSVGIIYGDIGTSPLYVYSS. Residues 81-94 lie on the Extracellular side of the membrane; that stretch reads TFPDGIGHRDDLVG. A helical transmembrane segment spans residues 95–115; it reads VLSLILYTLIIIPMLKYVFIV. At 116–181 the chain is on the cytoplasmic side; it reads LYANDNGDGG…HKLESSRAAK (66 aa). A helical transmembrane segment spans residues 182–202; it reads MALFFLTILGTSMVMGDGTLT. At 203-219 the chain is on the extracellular side; the sequence is PAISVLSAVSGIREKAP. A helical membrane pass occupies residues 220-240; sequence NLTQTQVVLISVAILFMLFSV. Over 241-247 the chain is Cytoplasmic; the sequence is QRFGTDK. The helical transmembrane segment at 248–268 threads the bilayer; the sequence is VGYTFAPIISVWFLLIAGIGL. Over 269 to 298 the chain is Extracellular; that stretch reads YNLVVHEITILKAFNPWYIVQYFRRNGKKG. Residues 299 to 319 form a helical membrane-spanning segment; that stretch reads WVSLGGVVLCVTGTEGMFADL. Residues 320-328 are Cytoplasmic-facing; it reads GHFNIRAVQ. The chain crosses the membrane as a helical span at residues 329 to 349; that stretch reads ISFNCILFPSVALCYIGQAAY. Residues 350–375 are Extracellular-facing; the sequence is LRKFPENVSDTFYKSIPGKYRDRLNF. The helical transmembrane segment at 376–398 threads the bilayer; sequence GPLFWPTFIVAILAAIIASQAML. Residues 399–429 lie on the Cytoplasmic side of the membrane; the sequence is SGAFAILSKALSLGCLPRVRVIHTSKKYEGQ. Residues 430 to 450 form a helical membrane-spanning segment; that stretch reads VYIPEVNFMMGLASIIVTIAF. The Extracellular segment spans residues 451–461; the sequence is RTTTSIGNAYG. Residues 462–482 form a helical membrane-spanning segment; that stretch reads ICVVTTFMVTTHLMTVVMLLI. Residues 483–487 are Cytoplasmic-facing; it reads WKKHL. The helical transmembrane segment at 488–508 threads the bilayer; that stretch reads VFILLFYCVFGFTEVVYLSSI. The Extracellular segment spans residues 509–511; the sequence is LSK. A helical membrane pass occupies residues 512 to 532; the sequence is FVDGGYLPFCFAMVLMTMMAT. Residues 533 to 801 are Cytoplasmic-facing; the sequence is WHYVHVRRYW…LLKVGITYEI (269 aa). Residues 679 to 728 form a disordered region; sequence DDDDEAAARPRRSTSSAVHSEEAIQAASSGRTTASSVQLQAGGEPPAAMD. The span at 704–717 shows a compositional bias: polar residues; it reads AASSGRTTASSVQL.

It belongs to the HAK/KUP transporter (TC 2.A.72.3) family. In terms of tissue distribution, expressed almost exclusively in roots.

It localises to the cell membrane. In terms of biological role, high-affinity potassium transporter. Also transports rubidium, with the same affinity and cesium, with a lower affinity. The polypeptide is Potassium transporter 1 (HAK1) (Oryza sativa subsp. japonica (Rice)).